The sequence spans 1000 residues: Bifunctional glutamine synthetase adenylyltransferase/adenylyl-removing enzyme (1000 aa).

Residues 1-481 are adenylyl removase; it reads MTAPGRRSST…LHEKLFYRPL (481 aa). The interval 487–1000 is adenylyl transferase; that stretch reads QLAPGEARLS…AVVDEQFYGA (514 aa).

Belongs to the GlnE family. Mg(2+) is required as a cofactor.

It carries out the reaction [glutamine synthetase]-O(4)-(5'-adenylyl)-L-tyrosine + phosphate = [glutamine synthetase]-L-tyrosine + ADP. It catalyses the reaction [glutamine synthetase]-L-tyrosine + ATP = [glutamine synthetase]-O(4)-(5'-adenylyl)-L-tyrosine + diphosphate. In terms of biological role, involved in the regulation of glutamine synthetase GlnA, a key enzyme in the process to assimilate ammonia. When cellular nitrogen levels are high, the C-terminal adenylyl transferase (AT) inactivates GlnA by covalent transfer of an adenylyl group from ATP to specific tyrosine residue of GlnA, thus reducing its activity. Conversely, when nitrogen levels are low, the N-terminal adenylyl removase (AR) activates GlnA by removing the adenylyl group by phosphorolysis, increasing its activity. The regulatory region of GlnE binds the signal transduction protein PII (GlnB) which indicates the nitrogen status of the cell. The polypeptide is Bifunctional glutamine synthetase adenylyltransferase/adenylyl-removing enzyme (Streptomyces avermitilis (strain ATCC 31267 / DSM 46492 / JCM 5070 / NBRC 14893 / NCIMB 12804 / NRRL 8165 / MA-4680)).